Here is a 70-residue protein sequence, read N- to C-terminus: Venom antimicrobial peptide-6 (70 aa).

The first 23 residues, 1 to 23 (MKSQTFFLLFLVVFLLAITQSEA), serve as a signal peptide directing secretion. F36 is modified (phenylalanine amide). Residues 40 to 70 (SLRDMDTMKYLYDPSLSAADLKTLQKLMENY) constitute a propeptide that is removed on maturation.

It belongs to the non-disulfide-bridged peptide (NDBP) superfamily. Short antimicrobial peptide (group 4) family. Expressed by the venom gland.

It is found in the secreted. The protein resides in the target cell membrane. Functionally, amphipathic peptide that exhibits extensive cytolytic activities against both prokaryotic and eukaryotic cells. Is more potent against Gram-positive bacteria (lethal concentration (LC)=0.25-2.9 uM) than against Gram-negative bacteria (LC=6.2-&gt;50 uM), and fungi ((LC)=14.1-&gt;50 uM). Shows hemolytic activity against rabbit erythrocytes (37.7% of inhibition at 6.25 uM) and cytolysis against rat dorsal root ganglions. In vivo, intravenous injection into mice tail provokes uncomfortable symptoms with a death rate of 12.5%. In Mesobuthus eupeus (Lesser Asian scorpion), this protein is Venom antimicrobial peptide-6.